Here is a 174-residue protein sequence, read N- to C-terminus: Extracellular cysteine protease (174 aa).

Active-site residues include C24, H120, and N141.

This sequence belongs to the peptidase C47 family. In terms of processing, proteolytically cleaved.

The protein localises to the secreted. It is found in the cell wall. Its activity is regulated as follows. Inhibited by heavy metal ions such as Zn(2+) or Ni(2+), iodoacetamide, N-ethylmaleimide, leupeptin, SDS and E-64. Also inhibited by chloromethylketones TPCK and TLCK and by human plasma inhibitor alpha-2-macroglobulin. Stimulated by L-cysteine. Functionally, cysteine protease able to cleave elastin, insulin, myoglobin, fibronectin, fibrinogen, HMW-kininogen, alpha-1-protease inhibitor and alpha-1-antitrypsin. Along with other extracellular proteases may contribute to the colonization and infection of human tissues. In Staphylococcus epidermidis, this protein is Extracellular cysteine protease (ecpA).